The chain runs to 94 residues: Co-chaperonin GroES (94 aa).

This sequence belongs to the GroES chaperonin family. In terms of assembly, heptamer of 7 subunits arranged in a ring. Interacts with the chaperonin GroEL.

It localises to the cytoplasm. Its function is as follows. Together with the chaperonin GroEL, plays an essential role in assisting protein folding. The GroEL-GroES system forms a nano-cage that allows encapsulation of the non-native substrate proteins and provides a physical environment optimized to promote and accelerate protein folding. GroES binds to the apical surface of the GroEL ring, thereby capping the opening of the GroEL channel. The sequence is that of Co-chaperonin GroES from Clostridium novyi (strain NT).